We begin with the raw amino-acid sequence, 533 residues long: Glucose-6-phosphate exchanger SLC37A1 (533 aa).

Residues 18 to 38 (QWYRAFIFILTFLLYASFHLS) form a helical membrane-spanning segment. An N-linked (GlcNAc...) asparagine glycan is attached at Asn-81. 4 consecutive transmembrane segments (helical) span residues 100–120 (GALDYSFLCAYAVGMYLSGII), 129–149 (YLTFGMLASGAFTALFGLGYF), 157–177 (FYVVTQVINGLVQTTGWPSVV), and 222–242 (SFVVPGAIVAAMGIVCFLFLI). N-linked (GlcNAc...) asparagine glycosylation occurs at Asn-263. 7 consecutive transmembrane segments (helical) span residues 304–324 (VVILPGDGGSGTAAISFTGAL), 334–354 (LCLLFAKLVSYTFLFWLPLYI), 366–386 (GELSTLFDVGGIFGGILAGVI), 394–414 (ASTCGLMLLLAAPTLYIFSTV), 423–443 (IAMLLLSGALVSGPYTLITTA), 466–486 (AIIDGTGSVGAALGPLLAGLL), and 490–510 (GWSNVFYMLMFADACALLFLI).

This sequence belongs to the major facilitator superfamily. Organophosphate:Pi antiporter (OPA) (TC 2.A.1.4) family. Expressed in numerous tissues, with highest expression in pancreas, kidney, bone marrow, spleen, liver, small intestine, as well as in fetal brain, liver and spleen.

It is found in the endoplasmic reticulum membrane. The catalysed reaction is D-glucose 6-phosphate(in) + phosphate(out) = D-glucose 6-phosphate(out) + phosphate(in). Its activity is regulated as follows. Inhibited by vanadate but not by chlorogenic acid. Functionally, inorganic phosphate and glucose-6-phosphate antiporter. May transport cytoplasmic glucose-6-phosphate into the lumen of the endoplasmic reticulum and translocate inorganic phosphate into the opposite direction. Independent of a lumenal glucose-6-phosphatase. May not play a role in homeostatic regulation of blood glucose levels. This chain is Glucose-6-phosphate exchanger SLC37A1, found in Homo sapiens (Human).